The following is a 356-amino-acid chain: Calcium/calmodulin-dependent protein kinase type 1 (356 aa).

A Nuclear localization signal motif is present at residues 2–7 (PLFKRR). The region spanning 22–278 (YDFRDVLGTG…CQSALEHPWI (257 aa)) is the Protein kinase domain. ATP contacts are provided by residues 28–36 (LGTGAFSKV) and lysine 52. Residue aspartate 144 is the Proton acceptor of the active site. Residue threonine 179 is modified to Phosphothreonine; by ckk-1. The autoinhibitory domain stretch occupies residues 278–318 (ISGNTAYTHDIHRTVAVHLKKSLAKRNWKKAFNAAAAIRQL). Positions 298 to 319 (KSLAKRNWKKAFNAAAAIRQLQ) are calmodulin-binding.

This sequence belongs to the protein kinase superfamily. CAMK Ser/Thr protein kinase family. CaMK subfamily. Mg(2+) is required as a cofactor.

It localises to the nucleus. It is found in the cytoplasm. It catalyses the reaction L-seryl-[protein] + ATP = O-phospho-L-seryl-[protein] + ADP + H(+). The enzyme catalyses L-threonyl-[protein] + ATP = O-phospho-L-threonyl-[protein] + ADP + H(+). Its activity is regulated as follows. Activated by Ca(2+)/calmodulin. Binding of calmodulin results in a conformational change that generates functional binding sites for both substrate and ATP, and thus relieves autoinhibition and lowers the Km of substrate binding. Must be phosphorylated by ckk-1 to be maximally active but this does not appear to be required for activity in AFD neurons. Calcium/calmodulin-dependent protein kinase that operates in the calcium-triggered CaMKK-CaMK1 signaling cascade which results in transcriptional activation. Transcriptional activation occurs at least in part through phosphorylation of crh-1. Regulates gene expression, sensory morphology, and function of the AFD thermosensory neurons. Involved in long-term adaptation of AFD neurons to temperatures warmer than the initial acclimatized cultivation temperature. Acts in the FLP thermal nociceptors to moderate the responsiveness to noxious heat and controls neuropeptide release from FLP neurons in response to temperature elevations. Regulates the dauer decision, the decision of the larvae to enter into the alternative stress-resistant and long-lived dauer developmental stage, based on the feeding state, primarily in the AWC sensory neurons. Acts non cell-autonomously in the AWC neurons to regulate expression of the daf-28 insulin-like peptide and cell-autonomously in the ASI sensory neurons to regulate expression of the growth promoting daf-7 in a food-regulated manner. Plays a role in memory-based thermal response of an individual AFD neuron cell. Involved in chemotaxis response in AWC neurons to attractant 2-heptanone, a volatile organic compound emitted by the nematode pathogenic bacterium B.nematocida B16. Represses transcription of glutamate receptor glr-1 in the nucleus basally and in response to change in synaptic activity. This is Calcium/calmodulin-dependent protein kinase type 1 (cmk-1) from Caenorhabditis briggsae.